Reading from the N-terminus, the 225-residue chain is Uracil-DNA glycosylase (225 aa).

Aspartate 65 acts as the Proton acceptor in catalysis.

This sequence belongs to the uracil-DNA glycosylase (UDG) superfamily. UNG family.

The protein resides in the cytoplasm. It catalyses the reaction Hydrolyzes single-stranded DNA or mismatched double-stranded DNA and polynucleotides, releasing free uracil.. Excises uracil residues from the DNA which can arise as a result of misincorporation of dUMP residues by DNA polymerase or due to deamination of cytosine. The polypeptide is Uracil-DNA glycosylase (Bacillus cereus (strain G9842)).